Here is a 238-residue protein sequence, read N- to C-terminus: IkB-like protein (238 aa).

4 ANK repeats span residues 48–77 (GSSV…PGEI), 86–115 (DGNS…KNGT), 123–152 (NGMT…DPTQ), and 157–187 (RGFT…PLYM). A Nuclear localization signal motif is present at residues 80–86 (PHRRDKD). The Nuclear localization signal motif lies at 202-213 (KKKPKIIITGCK). The PxIxITxC motif; Interaction with host PPP3CA signature appears at 205–212 (PKIIITGC). Residues 227–230 (FLCV) carry the FLCV motif motif.

It belongs to the asfivirus A238L family. In terms of assembly, interacts with host PPIA. Interacts with host PPP3CA/Calcineurin. Interacts with host RELA/p65; interaction of the 32 kDa form with host RELA results in the formation of a stable complex with NF-kappa-B. Interacts with host PPP3R1. Interacts with host EP300; this interaction inhibits the association of host EP300 with host RELA, JUN and NFATC2. Post-translationally, the protein exists in a 28 kDa and a 32 kDa form, probably due to post-translational modifications which are neither phosphorylation, nor sumoylation.

It localises to the host nucleus. Its subcellular location is the host cytoplasm. I-kappa-B- (IkB)-like protein that inhibits the binding of NF-kappa-B to DNA, thereby down-regulating pro-inflammatory cytokine production. Forms a heterodimer with the NF-kappa-B subunit RELA/p65 and prevents the activation of the NF-kappa-B transcription factor. Also inhibits the host calcineurin phosphatase activity, which is required for the induction of nuclear factor of activated T cells(NFAT)-dependent immune response genes. Inhibits calcineurin function, which is required for the induction of nuclear factor of activated T cells (NFAT)-dependent immune response genes. Prevents the binding of substrates to calcineurin without affecting the phosphatase activity. Does not contain the serine residues that are phosphorylated by host IkB kinase and thus is not degraded following stimulation of the NFkB pathway. The protein is IkB-like protein (A238L) of African swine fever virus (strain Badajoz 1971 Vero-adapted) (Ba71V).